The primary structure comprises 348 residues: GTPase Obg (348 aa).

In terms of domain architecture, Obg spans 1–159; that stretch reads MKFLDQARIY…MTLWLRLKLI (159 aa). Residues 160 to 327 enclose the OBG-type G domain; it reads ADAGLVGLPN…TLQSLLAAID (168 aa). Residues 166-173, 191-195, 212-215, 279-282, and 308-310 each bind GTP; these read GLPNAGKS, FTTLH, DIPG, SKID, and SAA. Serine 173 and threonine 193 together coordinate Mg(2+).

It belongs to the TRAFAC class OBG-HflX-like GTPase superfamily. OBG GTPase family. As to quaternary structure, monomer. The cofactor is Mg(2+).

It is found in the cytoplasm. Its function is as follows. An essential GTPase which binds GTP, GDP and possibly (p)ppGpp with moderate affinity, with high nucleotide exchange rates and a fairly low GTP hydrolysis rate. Plays a role in control of the cell cycle, stress response, ribosome biogenesis and in those bacteria that undergo differentiation, in morphogenesis control. In Beijerinckia indica subsp. indica (strain ATCC 9039 / DSM 1715 / NCIMB 8712), this protein is GTPase Obg.